We begin with the raw amino-acid sequence, 260 residues long: Apolipoprotein A-I (260 aa).

The first 18 residues, 1-18 (MKFAALALALLLAVGSHA), serve as a signal peptide directing secretion. A 3 X approximate tandem repeats region spans residues 32–63 (ARAVLDVYLTQVKDMSLRAVNQLDDPQYAEFK). Repeat copies occupy residues 64 to 85 (TNLA…GSVS) and 87 to 107 (MTDS…ESLN). The 10 X approximate tandem repeats stretch occupies residues 64 to 260 (TNLAQRIEEM…EIIAASVTKS (197 aa)). A 3; half-length repeat occupies 108 to 118 (VDLEALKSSLA). A run of 5 repeats spans residues 119 to 140 (PQNE…TLLT), 141 to 162 (PIYN…TRLE), 163 to 184 (PVME…AVLM), 185 to 206 (PMVE…EVVQ), and 207 to 225 (PYVQ…QAQT). The 9; half-length repeat unit spans residues 226 to 236 (VDTDALRTKIT). Residues 237 to 260 (PLVEEIKVKMNAIFEIIAASVTKS) form repeat 10.

It belongs to the apolipoprotein A1/A4/E family. Strong expression in liver with lower expression in intestine.

The protein localises to the secreted. In terms of biological role, participates in the reverse transport of cholesterol from tissues to the liver for excretion by promoting cholesterol efflux from tissues and by acting as a cofactor for the lecithin cholesterol acyltransferase (LCAT). The polypeptide is Apolipoprotein A-I (apoa1) (Sparus aurata (Gilthead sea bream)).